We begin with the raw amino-acid sequence, 120 residues long: Holo-[acyl-carrier-protein] synthase (120 aa).

D8 and E58 together coordinate Mg(2+).

Belongs to the P-Pant transferase superfamily. AcpS family. The cofactor is Mg(2+).

The protein localises to the cytoplasm. It carries out the reaction apo-[ACP] + CoA = holo-[ACP] + adenosine 3',5'-bisphosphate + H(+). Its function is as follows. Transfers the 4'-phosphopantetheine moiety from coenzyme A to a Ser of acyl-carrier-protein. This Limosilactobacillus reuteri (strain DSM 20016) (Lactobacillus reuteri) protein is Holo-[acyl-carrier-protein] synthase.